A 267-amino-acid chain; its full sequence is MFVYDVVNALDYEKARSIITAFISQYVQRAGSRGVVVGISGGVDSTVAAALAVEALGRQRVLGLLMPSLYTPPEDLKDALDVINALGVEWKRVDITPIYDAFVKTLPDFSQENRVAAGNILPRIRMTVLYYYANKYNLLVMGTGDRSELLLGYFTKYGDGGVDFLPIGSLFKLQVRELAARLGFADIAKKPSSPRLWQGHTAEGELGASYEVIDQVLYAVFDLKKPPEEVRGFFGEVVDIVITRVKKNIHKLTPPAYPDITPARRNV.

38-45 (GISGGVDS) contributes to the ATP binding site. Asp44 provides a ligand contact to Mg(2+). Residue Arg123 coordinates deamido-NAD(+). Thr143 is a binding site for ATP. A Mg(2+)-binding site is contributed by Glu148. Residues Lys156 and Asp163 each contribute to the deamido-NAD(+) site. 2 residues coordinate ATP: Lys172 and Ser193. 250–251 (HK) provides a ligand contact to deamido-NAD(+).

It belongs to the NAD synthetase family. As to quaternary structure, homodimer.

The catalysed reaction is deamido-NAD(+) + NH4(+) + ATP = AMP + diphosphate + NAD(+) + H(+). It functions in the pathway cofactor biosynthesis; NAD(+) biosynthesis; NAD(+) from deamido-NAD(+) (ammonia route): step 1/1. Its function is as follows. Catalyzes the ATP-dependent amidation of deamido-NAD to form NAD. Uses ammonia as a nitrogen source. This chain is NH(3)-dependent NAD(+) synthetase, found in Pyrobaculum aerophilum (strain ATCC 51768 / DSM 7523 / JCM 9630 / CIP 104966 / NBRC 100827 / IM2).